Consider the following 20-residue polypeptide: 44 kDa cell wall protein 2 (20 aa).

It localises to the secreted. It is found in the cell wall. The sequence is that of 44 kDa cell wall protein 2 from Solanum lycopersicum (Tomato).